A 376-amino-acid chain; its full sequence is DNA-directed RNA polymerase subunit alpha (376 aa).

The segment at 1–259 (MSDCSQNLLY…KHFSIFEKMD (259 aa)) is alpha N-terminal domain (alpha-NTD). Residues 276–376 (KDDILHKLVL…DKIRSKNGKG (101 aa)) form an alpha C-terminal domain (alpha-CTD) region.

Belongs to the RNA polymerase alpha chain family. As to quaternary structure, homodimer. The RNAP catalytic core consists of 2 alpha, 1 beta, 1 beta' and 1 omega subunit. When a sigma factor is associated with the core the holoenzyme is formed, which can initiate transcription.

The enzyme catalyses RNA(n) + a ribonucleoside 5'-triphosphate = RNA(n+1) + diphosphate. DNA-dependent RNA polymerase catalyzes the transcription of DNA into RNA using the four ribonucleoside triphosphates as substrates. The chain is DNA-directed RNA polymerase subunit alpha from Chlamydia abortus (strain DSM 27085 / S26/3) (Chlamydophila abortus).